The following is a 496-amino-acid chain: Lysine--tRNA ligase (496 aa).

Mg(2+)-binding residues include E409 and E416.

Belongs to the class-II aminoacyl-tRNA synthetase family. Homodimer. Requires Mg(2+) as cofactor.

It is found in the cytoplasm. It catalyses the reaction tRNA(Lys) + L-lysine + ATP = L-lysyl-tRNA(Lys) + AMP + diphosphate. In Streptococcus mutans serotype c (strain ATCC 700610 / UA159), this protein is Lysine--tRNA ligase.